We begin with the raw amino-acid sequence, 833 residues long: Leucine--tRNA ligase (833 aa).

The 'HIGH' region signature appears at 41-52; that stretch reads PYPSGAGLHVGH. Positions 610–614 match the 'KMSKS' region motif; sequence KMSKS. Lysine 613 is a binding site for ATP.

The protein belongs to the class-I aminoacyl-tRNA synthetase family.

The protein resides in the cytoplasm. The enzyme catalyses tRNA(Leu) + L-leucine + ATP = L-leucyl-tRNA(Leu) + AMP + diphosphate. This is Leucine--tRNA ligase from Streptococcus pneumoniae (strain Taiwan19F-14).